Reading from the N-terminus, the 253-residue chain is Serine/threonine-protein phosphatase 3 (253 aa).

The cofactor is Mn(2+). Post-translationally, phosphorylated by YegI.

The catalysed reaction is O-phospho-L-seryl-[protein] + H2O = L-seryl-[protein] + phosphate. It catalyses the reaction O-phospho-L-threonyl-[protein] + H2O = L-threonyl-[protein] + phosphate. Its activity is regulated as follows. Activity dramatically decreases in the presence of the general protein phosphatase inhibitor sodium phosphate. Slightly inhibited by sodium fluoride. Activity decreases in the presence of the metal chelator EDTA. PP2C-like phosphatase that can dephosphorylate YegI. In vitro, can hydrolyze p-nitrophenyl phosphate (pNPP) to p-nitrophenol. The chain is Serine/threonine-protein phosphatase 3 from Escherichia coli (strain K12).